The primary structure comprises 476 residues: Trigger factor (476 aa).

The PPIase FKBP-type domain maps to 169–254; sequence GDKVTLDYVG…VKEVAAAEEL (86 aa). Residues 437 to 476 are disordered; it reads SRDELLAEDEAEGEEKKAAGETKKKAAPKKKAAKKESAAE. Residues 450–460 show a composition bias toward basic and acidic residues; sequence EEKKAAGETKK.

Belongs to the FKBP-type PPIase family. Tig subfamily.

The protein resides in the cytoplasm. The catalysed reaction is [protein]-peptidylproline (omega=180) = [protein]-peptidylproline (omega=0). Involved in protein export. Acts as a chaperone by maintaining the newly synthesized protein in an open conformation. Functions as a peptidyl-prolyl cis-trans isomerase. The polypeptide is Trigger factor (Chelativorans sp. (strain BNC1)).